A 964-amino-acid chain; its full sequence is Vitamin B12-dependent ribonucleotide reductase (964 aa).

A disordered region spans residues 1–21 (MTETASGPARGSRAKGTKAKG). Residues 12-21 (SRAKGTKAKG) are compositionally biased toward basic residues. Substrate is bound by residues serine 142, 158-159 (AC), glycine 187, 363-367 (NPCSE), and 553-557 (PTGTI). Cysteine 159 and cysteine 376 are joined by a disulfide. The Proton acceptor role is filled by asparagine 363. Cysteine 365 functions as the Cysteine radical intermediate in the catalytic mechanism. Glutamate 367 functions as the Proton acceptor in the catalytic mechanism.

This sequence belongs to the ribonucleoside diphosphate reductase class-2 family. It depends on adenosylcob(III)alamin as a cofactor.

It catalyses the reaction a 2'-deoxyribonucleoside 5'-diphosphate + [thioredoxin]-disulfide + H2O = a ribonucleoside 5'-diphosphate + [thioredoxin]-dithiol. Its function is as follows. Catalyzes the reduction of ribonucleotides to deoxyribonucleotides. May function to provide a pool of deoxyribonucleotide precursors for DNA repair during oxygen limitation and/or for immediate growth after restoration of oxygen. The chain is Vitamin B12-dependent ribonucleotide reductase (nrdJ) from Streptomyces avermitilis (strain ATCC 31267 / DSM 46492 / JCM 5070 / NBRC 14893 / NCIMB 12804 / NRRL 8165 / MA-4680).